We begin with the raw amino-acid sequence, 242 residues long: MTTVSMRDMLQAGVHFGHQTRYWNPKMKPFIFGARNGVHIINLEHTVPMFNEALAFISNIASKKGKVLFVGTKRAAGEAIKASALSCDQYYVDHRWLGGMLTNWKTVRQSIKRLKELESQSVDGTFDKLTKKEALMRSRELDKLEKSLGGIKNMGGLPDVLFVIGADHEHIAIKEANNLGIPVVAVVDTNSAPDGVNYIVPGNDDAMRAIRLYTSSVAAAANAGRGQDLAVQAEQDGFVEAV.

Belongs to the universal ribosomal protein uS2 family.

This Shewanella frigidimarina (strain NCIMB 400) protein is Small ribosomal subunit protein uS2.